A 451-amino-acid polypeptide reads, in one-letter code: Subtilase-type proteinase psp3 (451 aa).

An N-terminal signal peptide occupies residues 1-20 (MRVSWISGLLLVAHLAPSSA). Positions 80 to 161 (YIVMFKPSVD…LVEPDRVMHV (82 aa)) constitute an Inhibitor I9 domain. A Peptidase S8 domain is found at 169-451 (PWGLARVSHR…PNVLAFNNYE (283 aa)). Active-site charge relay system residues include Asp205, His237, and Ser394.

The protein belongs to the peptidase S8 family.

This chain is Subtilase-type proteinase psp3 (psp3), found in Schizosaccharomyces pombe (strain 972 / ATCC 24843) (Fission yeast).